The chain runs to 100 residues: EKC/KEOPS complex subunit GON7 (100 aa).

At Met1 the chain carries N-acetylmethionine. The segment at 61-100 is disordered; it reads AAAPDEDLDGDDEDDAEDENNIDNRTNFDGPSAKRPKTPS. Acidic residues predominate over residues 64–81; that stretch reads PDEDLDGDDEDDAEDENN.

Component of the EKC/KEOPS complex composed of at least GON7, TP53RK, TPRKB, OSGEP and LAGE3; the whole complex dimerizes.

It localises to the nucleus. In terms of biological role, component of the EKC/KEOPS complex that is required for the formation of a threonylcarbamoyl group on adenosine at position 37 (t(6)A37) in tRNAs that read codons beginning with adenine. The complex is probably involved in the transfer of the threonylcarbamoyl moiety of threonylcarbamoyl-AMP (TC-AMP) to the N6 group of A37. GON7 plays a supporting role to the catalytic subunit OSGEP in the complex. This Homo sapiens (Human) protein is EKC/KEOPS complex subunit GON7.